Reading from the N-terminus, the 203-residue chain is SOSS complex subunit B1-A (203 aa).

A DNA-binding region (OB) is located at residues 22-92 (IVLETGRVTK…TLYTGRGGDL (71 aa)). The segment at 110–203 (EPNPEYIAQQ…GKESRRTGKR (94 aa)) is disordered. Low complexity predominate over residues 118–140 (QQSQSKQGQQESGTGTNNHNSSS). The segment covering 149–182 (ENGNGSNSSGPPAHQSTAPAHSASGRITRSQPNH) has biased composition (polar residues).

It belongs to the SOSS-B family. SOSS-B1 subfamily. Component of the SOSS complex, composed of soss-b (soss-b1/nabp2 or soss-b2/nabp1), soss-a/ints3 and soss-c/inip. SOSS complexes containing soss-b1/nabp2 are more abundant than complexes containing soss-b2/nabp1.

It localises to the nucleus. Component of the SOSS complex, a multiprotein complex that functions downstream of the MRN complex to promote DNA repair and G2/M checkpoint. In the SOSS complex, acts as a sensor of single-stranded DNA that binds to single-stranded DNA. The SOSS complex associates with DNA lesions and influences diverse endpoints in the cellular DNA damage response including cell-cycle checkpoint activation, recombinational repair and maintenance of genomic stability. Required for efficient homologous recombination-dependent repair of double-strand breaks (DSBs). The chain is SOSS complex subunit B1-A (nabp2-a) from Xenopus laevis (African clawed frog).